Here is a 286-residue protein sequence, read N- to C-terminus: Beta-lactamase SHV-46 (286 aa).

An N-terminal signal peptide occupies residues 1 to 21 (MRYIRLCIISLLATLPLAVHA). The active-site Acyl-ester intermediate is serine 66. An intrachain disulfide couples cysteine 73 to cysteine 119. The Proton acceptor role is filled by glutamate 164. Position 230–232 (230–232 (KTG)) interacts with substrate.

Belongs to the class-A beta-lactamase family.

The catalysed reaction is a beta-lactam + H2O = a substituted beta-amino acid. The protein is Beta-lactamase SHV-46 (bla) of Klebsiella oxytoca.